A 304-amino-acid polypeptide reads, in one-letter code: MNKTLKIATRQSPLALWQAQNVKIRLEKHHPDLTVILVEMTTKGDQILNSPLSKIGGKGLFIKELEVSMMKGITDIAVHSMKDVPYEIPQGFKLGAILKRENPFDAFVSNDFSSIDDLPQNAKVGTCSIRRIVQLKAIRPDLKILDLRGNVNTRLKKLDKGGFDGIILACAGLIRLGFESRIKQQISDQQSLPAVGQGVVGIEIRENDTEILDLIKPLIDVETTYMVSAERAMNARLEGGCSVPIAGFALIDNEQIMLTGLVGNVDTGVILKEQILSHVSQAEALGVELANKLISLGAKDILKN.

Position 241 is an S-(dipyrrolylmethanemethyl)cysteine (Cys241).

This sequence belongs to the HMBS family. Monomer. It depends on dipyrromethane as a cofactor.

The catalysed reaction is 4 porphobilinogen + H2O = hydroxymethylbilane + 4 NH4(+). The protein operates within porphyrin-containing compound metabolism; protoporphyrin-IX biosynthesis; coproporphyrinogen-III from 5-aminolevulinate: step 2/4. In terms of biological role, tetrapolymerization of the monopyrrole PBG into the hydroxymethylbilane pre-uroporphyrinogen in several discrete steps. This chain is Porphobilinogen deaminase, found in Ruthia magnifica subsp. Calyptogena magnifica.